Here is a 453-residue protein sequence, read N- to C-terminus: RuvB-like helicase 1 (453 aa).

71-78 (GGPGTGKT) is a binding site for ATP.

The protein belongs to the RuvB family. May form heterododecamers with RVB2. Component of the SWR1 chromatin remodeling complex, the INO80 chromatin remodeling complex, and of the R2TP complex.

It localises to the nucleus. It catalyses the reaction ATP + H2O = ADP + phosphate + H(+). Its function is as follows. DNA helicase which participates in several chromatin remodeling complexes, including the SWR1 and the INO80 complexes. The SWR1 complex mediates the ATP-dependent exchange of histone H2A for the H2A variant HZT1 leading to transcriptional regulation of selected genes by chromatin remodeling. The INO80 complex remodels chromatin by shifting nucleosomes and is involved in DNA repair. Also involved in pre-rRNA processing. This Yarrowia lipolytica (strain CLIB 122 / E 150) (Yeast) protein is RuvB-like helicase 1 (RVB1).